A 278-amino-acid chain; its full sequence is MRLKHPTARLALAALLVAVPRSVAAAGTVHAAPAPAGATRLAAVGLDDPHKKDIAMQLVSSAENSSLDWKSQYKYIEDIKDGRGYTAGIIGFCSGTGDMLDLVADYTDLKPGNILAKYLPALRKVNGTESHAGLASAFEKDWATAAKDSVFQQAQNDERDRSYFNPAVNQAKASLRALGQFAYYDAIVMHGPGDSSDSFGGIRKAAMKKAKTPAQGRDEATYLKAFLAARKTVMLKEEAHSDTSRVDTEQTVFLNAKNFDLNPPLKWKVYGDSYAINS.

Residues 1 to 41 (MRLKHPTARLALAALLVAVPRSVAAAGTVHAAPAPAGATRL) form the signal peptide. The Proton donor role is filled by Glu-63. The active-site Nucleophile is Asp-81.

This sequence belongs to the glycosyl hydrolase 46 family.

Its subcellular location is the secreted. It carries out the reaction Endohydrolysis of beta-(1-&gt;4)-linkages between D-glucosamine residues in a partly acetylated chitosan.. Functionally, aids in the defense against invading fungal pathogens by degrading their cell wall chitosan. In Nocardioides sp. (strain N106), this protein is Chitosanase (csn).